The following is a 158-amino-acid chain: Transcription factor BTF3 homolog 4 (158 aa).

The region spanning 33–98 is the NAC-A/B domain; the sequence is TADDKKLQSS…AEVKQITEML (66 aa). The disordered stretch occupies residues 123–158; the sequence is QVLDSKASKPEDIEEEDDDVPELVGNFDEASKNEAN. Positions 134–143 are enriched in acidic residues; sequence DIEEEDDDVP.

The protein belongs to the NAC-beta family.

This chain is Transcription factor BTF3 homolog 4 (btf3l4), found in Xenopus laevis (African clawed frog).